The following is a 461-amino-acid chain: L-serine dehydratase (461 aa).

This sequence belongs to the iron-sulfur dependent L-serine dehydratase family. [4Fe-4S] cluster is required as a cofactor.

The enzyme catalyses L-serine = pyruvate + NH4(+). Its pathway is carbohydrate biosynthesis; gluconeogenesis. The protein is L-serine dehydratase (sdaA) of Mycobacterium bovis (strain ATCC BAA-935 / AF2122/97).